Consider the following 418-residue polypeptide: Arginine deiminase (418 aa).

The active-site Amidino-cysteine intermediate is the C406.

The protein belongs to the arginine deiminase family.

Its subcellular location is the cytoplasm. The enzyme catalyses L-arginine + H2O = L-citrulline + NH4(+). It functions in the pathway amino-acid degradation; L-arginine degradation via ADI pathway; carbamoyl phosphate from L-arginine: step 1/2. The chain is Arginine deiminase from Lentilactobacillus hilgardii (Lactobacillus hilgardii).